The chain runs to 117 residues: Small ribosomal subunit protein bS6 (117 aa).

The segment at lysine 92 to arginine 117 is disordered. The span at glutamine 105 to arginine 117 shows a compositional bias: basic and acidic residues.

The protein belongs to the bacterial ribosomal protein bS6 family.

Its function is as follows. Binds together with bS18 to 16S ribosomal RNA. This Dinoroseobacter shibae (strain DSM 16493 / NCIMB 14021 / DFL 12) protein is Small ribosomal subunit protein bS6.